The chain runs to 237 residues: Large ribosomal subunit protein uL1 (237 aa).

Belongs to the universal ribosomal protein uL1 family. Part of the 50S ribosomal subunit.

Binds directly to 23S rRNA. The L1 stalk is quite mobile in the ribosome, and is involved in E site tRNA release. Its function is as follows. Protein L1 is also a translational repressor protein, it controls the translation of the L11 operon by binding to its mRNA. The chain is Large ribosomal subunit protein uL1 from Dehalococcoides mccartyi (strain ATCC BAA-2100 / JCM 16839 / KCTC 5957 / BAV1).